The sequence spans 178 residues: Acireductone dioxygenase 1 (178 aa).

The Fe(2+) site is built by H84, H86, E90, and H130. Positions 84, 86, 90, and 130 each coordinate Ni(2+).

The protein belongs to the acireductone dioxygenase (ARD) family. Requires Fe(2+) as cofactor. Ni(2+) is required as a cofactor.

The protein resides in the cytoplasm. It localises to the nucleus. It catalyses the reaction 1,2-dihydroxy-5-(methylsulfanyl)pent-1-en-3-one + O2 = 4-methylsulfanyl-2-oxobutanoate + formate + 2 H(+). The catalysed reaction is 1,2-dihydroxy-5-(methylsulfanyl)pent-1-en-3-one + O2 = 3-(methylsulfanyl)propanoate + CO + formate + 2 H(+). It participates in amino-acid biosynthesis; L-methionine biosynthesis via salvage pathway; L-methionine from S-methyl-5-thio-alpha-D-ribose 1-phosphate: step 5/6. Functionally, catalyzes 2 different reactions between oxygen and the acireductone 1,2-dihydroxy-3-keto-5-methylthiopentene (DHK-MTPene) depending upon the metal bound in the active site. Fe-containing acireductone dioxygenase (Fe-ARD) produces formate and 2-keto-4-methylthiobutyrate (KMTB), the alpha-ketoacid precursor of methionine in the methionine recycle pathway. Ni-containing acireductone dioxygenase (Ni-ARD) produces methylthiopropionate, carbon monoxide and formate, and does not lie on the methionine recycle pathway. This chain is Acireductone dioxygenase 1, found in Coprinopsis cinerea (strain Okayama-7 / 130 / ATCC MYA-4618 / FGSC 9003) (Inky cap fungus).